We begin with the raw amino-acid sequence, 224 residues long: UPF0758 protein VCM66_0205 (224 aa).

A disordered region spans residues 1–20 (MSLKQLPTESMPREKLLQRG). One can recognise an MPN domain in the interval 102–224 (ALTSPQQTKL…VVSFAERGWI (123 aa)). Residues H173, H175, and D186 each coordinate Zn(2+). Residues 173–186 (HNHPSGVAEPSQAD) carry the JAMM motif motif.

The protein belongs to the UPF0758 family.

The sequence is that of UPF0758 protein VCM66_0205 from Vibrio cholerae serotype O1 (strain M66-2).